The chain runs to 320 residues: Methionyl-tRNA formyltransferase (320 aa).

114-117 (SLLP) is a (6S)-5,6,7,8-tetrahydrofolate binding site.

This sequence belongs to the Fmt family.

The catalysed reaction is L-methionyl-tRNA(fMet) + (6R)-10-formyltetrahydrofolate = N-formyl-L-methionyl-tRNA(fMet) + (6S)-5,6,7,8-tetrahydrofolate + H(+). Attaches a formyl group to the free amino group of methionyl-tRNA(fMet). The formyl group appears to play a dual role in the initiator identity of N-formylmethionyl-tRNA by promoting its recognition by IF2 and preventing the misappropriation of this tRNA by the elongation apparatus. The sequence is that of Methionyl-tRNA formyltransferase from Acinetobacter baumannii (strain AB0057).